We begin with the raw amino-acid sequence, 302 residues long: Putative S-adenosyl-L-methionine-dependent methyltransferase MUL_2961 (302 aa).

Residues Asp128 and 157 to 158 (DL) contribute to the S-adenosyl-L-methionine site.

It belongs to the UPF0677 family.

In terms of biological role, exhibits S-adenosyl-L-methionine-dependent methyltransferase activity. The polypeptide is Putative S-adenosyl-L-methionine-dependent methyltransferase MUL_2961 (Mycobacterium ulcerans (strain Agy99)).